Consider the following 425-residue polypeptide: Paired box pox-neuro protein (425 aa).

A DNA-binding region (paired) is located at residues 5–132 (GQAGVNQLGG…SSINRILRNS (128 aa)). Positions 8–64 (GVNQLGGVFVNGRPLPDCVRRRIVDLALCGVRPCDISRQLLVSHGCVSKILTRFYET) are PAI subdomain. Positions 84 to 132 (TVVKKIIRLKEENSGMFAWEIREQLQQQRVCDPSSVPSISSINRILRNS) are RED subdomain. Disordered stretches follow at residues 159–188 (QAGS…AATP), 297–358 (TKSE…RKRN), and 383–425 (LESS…EVVN). Residues 172–185 (APPPPVTVAPPTPA) are compositionally biased toward pro residues. Low complexity-rich tracts occupy residues 323–332 (SSPAALSLTA) and 340–349 (GSAPEASPGS). Residues 402–425 (TPEDEDPAEAEEEQEEEDSVEVVN) show a composition bias toward acidic residues.

As to expression, central and peripheral nervous systems.

The protein resides in the nucleus. Transcriptional regulator that specifies poly-innervated organs (chemosensory bristle). Also controls the number of neurons. In Drosophila melanogaster (Fruit fly), this protein is Paired box pox-neuro protein (Poxn).